Here is a 360-residue protein sequence, read N- to C-terminus: uncharacterized protein (360 aa).

The ABC transporter domain occupies 4 to 235 (LSLQHIQKIY…PANMFVAGFI (232 aa)). An ATP-binding site is contributed by 37-44 (GPSGCGKS).

The protein belongs to the ABC transporter superfamily.

This is an uncharacterized protein from Escherichia coli O6:K15:H31 (strain 536 / UPEC).